We begin with the raw amino-acid sequence, 191 residues long: Large ribosomal subunit protein uL5 (191 aa).

Belongs to the universal ribosomal protein uL5 family. As to quaternary structure, part of the 50S ribosomal subunit; part of the 5S rRNA/L5/L18/L25 subcomplex. Contacts the 5S rRNA and the P site tRNA. Forms a bridge to the 30S subunit in the 70S ribosome.

Functionally, this is one of the proteins that bind and probably mediate the attachment of the 5S RNA into the large ribosomal subunit, where it forms part of the central protuberance. In the 70S ribosome it contacts protein S13 of the 30S subunit (bridge B1b), connecting the 2 subunits; this bridge is implicated in subunit movement. Contacts the P site tRNA; the 5S rRNA and some of its associated proteins might help stabilize positioning of ribosome-bound tRNAs. This is Large ribosomal subunit protein uL5 from Micrococcus luteus (strain ATCC 4698 / DSM 20030 / JCM 1464 / CCM 169 / CCUG 5858 / IAM 1056 / NBRC 3333 / NCIMB 9278 / NCTC 2665 / VKM Ac-2230) (Micrococcus lysodeikticus).